We begin with the raw amino-acid sequence, 408 residues long: Imidazolonepropionase (408 aa).

Fe(3+)-binding residues include His-72 and His-74. Zn(2+) is bound by residues His-72 and His-74. 3 residues coordinate 4-imidazolone-5-propanoate: Arg-81, Tyr-144, and His-177. Tyr-144 is an N-formimidoyl-L-glutamate binding site. Fe(3+) is bound at residue His-242. Zn(2+) is bound at residue His-242. Gln-245 contributes to the 4-imidazolone-5-propanoate binding site. Residue Asp-317 participates in Fe(3+) binding. Asp-317 is a Zn(2+) binding site. N-formimidoyl-L-glutamate is bound by residues Asn-319 and Gly-321. A 4-imidazolone-5-propanoate-binding site is contributed by Thr-322.

Belongs to the metallo-dependent hydrolases superfamily. HutI family. The cofactor is Zn(2+). It depends on Fe(3+) as a cofactor.

It localises to the cytoplasm. The enzyme catalyses 4-imidazolone-5-propanoate + H2O = N-formimidoyl-L-glutamate. It functions in the pathway amino-acid degradation; L-histidine degradation into L-glutamate; N-formimidoyl-L-glutamate from L-histidine: step 3/3. Catalyzes the hydrolytic cleavage of the carbon-nitrogen bond in imidazolone-5-propanoate to yield N-formimidoyl-L-glutamate. It is the third step in the universal histidine degradation pathway. The polypeptide is Imidazolonepropionase (Aliivibrio fischeri (strain MJ11) (Vibrio fischeri)).